The sequence spans 247 residues: MRSSNLTTTVHFLSPVFAAFFPSHGTEQEDAPIVRVKTAKGRKISSTNWIRRQVNDQYVSLAKKEGYRSRSAYKLIEINDKFKILQRGRFVLDLGSSPGGWAQVASKNTAIIDSTEPTVVAVDIQSMKDIHNVSFVQCDIDSDHDLLNEKLSGRKFDVVLSDMAPKSCGHRQVDHANIINLCELARDIALEYLNPNGSFVTKLLHGEYEQEFRRSIMTHFGVVSYFKPKSSRKDSSEIYLVALKFKG.

The S-adenosyl-L-methionine site is built by glycine 99, tryptophan 101, aspartate 123, aspartate 139, and aspartate 162. Lysine 202 functions as the Proton acceptor in the catalytic mechanism.

Belongs to the class I-like SAM-binding methyltransferase superfamily. RNA methyltransferase RlmE family.

The protein localises to the cytoplasm. It carries out the reaction uridine(2552) in 23S rRNA + S-adenosyl-L-methionine = 2'-O-methyluridine(2552) in 23S rRNA + S-adenosyl-L-homocysteine + H(+). In terms of biological role, specifically methylates the uridine in position 2552 of 23S rRNA at the 2'-O position of the ribose in the fully assembled 50S ribosomal subunit. The sequence is that of Ribosomal RNA large subunit methyltransferase E from Anaplasma phagocytophilum (strain HZ).